The following is a 342-amino-acid chain: Nucleoid-associated protein Shewana3_2426 (342 aa).

This sequence belongs to the YejK family.

It is found in the cytoplasm. The protein localises to the nucleoid. This chain is Nucleoid-associated protein Shewana3_2426, found in Shewanella sp. (strain ANA-3).